Reading from the N-terminus, the 244-residue chain is Chaperone protein FimB/FhaD (244 aa).

An N-terminal signal peptide occupies residues 1–24; sequence MARWRRRLGVAALGAAMLASLAPA.

The protein belongs to the periplasmic pilus chaperone family.

It localises to the periplasm. Functionally, required for the biogenesis of the filamentous hemagglutinin and the fimbria. The chain is Chaperone protein FimB/FhaD (fimB) from Bordetella pertussis (strain Tohama I / ATCC BAA-589 / NCTC 13251).